The primary structure comprises 310 residues: Zinc transporter ZIP9 (310 aa).

The next 8 helical transmembrane spans lie at 7-27, 35-55, 108-128, 148-168, 178-198, 212-232, 246-266, and 289-309; these read ISLLSVAMLVGCYVAGTIPLA, LKLITVLGAGLLCGTALAVII, ACIGVSLVLGFVFMLLVDQIG, ITTTLGLVVHAAADGVALGAA, LIVFVAIMLHKAPAAFGLVSF, HLLVFALAAPVLAMLTFLGLS, GVAMLFSAGTFLYVATVHVLP, and VEVVALVLGCLIPLVLSVGHH.

The protein belongs to the ZIP transporter (TC 2.A.5) family. In terms of tissue distribution, expressed in brain, liver, ovary, and testis.

It is found in the golgi apparatus. It localises to the trans-Golgi network membrane. The protein resides in the cell membrane. Its subcellular location is the cytoplasm. The protein localises to the perinuclear region. It is found in the mitochondrion. It localises to the nucleus. It carries out the reaction Zn(2+)(in) = Zn(2+)(out). In terms of biological role, has dual functions as a membrane-bound androgen receptor and as an androgen-dependent zinc transporter both of which are mediated through G protein activation and are required for the androgen-dependent apoptotic response. Upon androgen binding, mediates apoptosis by directly activating a stimulatory G protein that leads to increased cAMP levels and MAP kinase activity and which is accompanied by increased intracellular free zinc levels. This chain is Zinc transporter ZIP9, found in Micropogonias undulatus (Atlantic croaker).